The primary structure comprises 344 residues: tRNA N6-adenosine threonylcarbamoyltransferase (344 aa).

Histidine 119 and histidine 123 together coordinate Fe cation. Substrate contacts are provided by residues 141–145 (VVSGG), aspartate 174, glycine 187, aspartate 191, and asparagine 280. Aspartate 310 is a binding site for Fe cation.

It belongs to the KAE1 / TsaD family. It depends on Fe(2+) as a cofactor.

The protein localises to the cytoplasm. The catalysed reaction is L-threonylcarbamoyladenylate + adenosine(37) in tRNA = N(6)-L-threonylcarbamoyladenosine(37) in tRNA + AMP + H(+). Functionally, required for the formation of a threonylcarbamoyl group on adenosine at position 37 (t(6)A37) in tRNAs that read codons beginning with adenine. Is involved in the transfer of the threonylcarbamoyl moiety of threonylcarbamoyl-AMP (TC-AMP) to the N6 group of A37, together with TsaE and TsaB. TsaD likely plays a direct catalytic role in this reaction. This is tRNA N6-adenosine threonylcarbamoyltransferase from Listeria monocytogenes serovar 1/2a (strain ATCC BAA-679 / EGD-e).